The primary structure comprises 228 residues: DNA mismatch repair protein MutH (228 aa).

This sequence belongs to the MutH family.

The protein localises to the cytoplasm. In terms of biological role, sequence-specific endonuclease that cleaves unmethylated GATC sequences. It is involved in DNA mismatch repair. The chain is DNA mismatch repair protein MutH from Yersinia enterocolitica serotype O:8 / biotype 1B (strain NCTC 13174 / 8081).